Here is a 336-residue protein sequence, read N- to C-terminus: Alcohol dehydrogenase, propanol-preferring (336 aa).

Zn(2+) is bound by residues Cys-37, His-58, Cys-89, Cys-92, Cys-95, Cys-103, and Cys-145.

It belongs to the zinc-containing alcohol dehydrogenase family. Requires Zn(2+) as cofactor.

The enzyme catalyses a primary alcohol + NAD(+) = an aldehyde + NADH + H(+). The catalysed reaction is a secondary alcohol + NAD(+) = a ketone + NADH + H(+). Its function is as follows. Preferred specificity is towards 1-propanol. The chain is Alcohol dehydrogenase, propanol-preferring (adhP) from Escherichia coli (strain K12).